A 786-amino-acid chain; its full sequence is Mitochondrial intermediate peptidase (786 aa).

The transit peptide at 1–29 directs the protein to the mitochondrion; it reads MSSILLRSYRHHAKVWTRPSSKSSFIRSL. His567 provides a ligand contact to Zn(2+). Glu568 is a catalytic residue. Zn(2+) is bound by residues His571 and His574.

This sequence belongs to the peptidase M3 family. Zn(2+) is required as a cofactor.

The protein localises to the mitochondrion matrix. The catalysed reaction is Release of an N-terminal octapeptide as second stage of processing of some proteins imported into the mitochondrion.. Cleaves proteins, imported into the mitochondrion, to their mature size. While most mitochondrial precursor proteins are processed to the mature form in one step by mitochondrial processing peptidase (MPP), the sequential cleavage by MIP of an octapeptide after initial processing by MPP is a required step for a subgroup of nuclear-encoded precursor proteins destined for the matrix or the inner membrane. In Meyerozyma guilliermondii (strain ATCC 6260 / CBS 566 / DSM 6381 / JCM 1539 / NBRC 10279 / NRRL Y-324) (Yeast), this protein is Mitochondrial intermediate peptidase (OCT1).